A 467-amino-acid polypeptide reads, in one-letter code: Iroquois-class homeodomain protein irx-1 (467 aa).

Residues 126 to 188 (DPGRPKNATR…NARRRLKKEN (63 aa)) constitute a DNA-binding region (homeobox; TALE-type). Disordered stretches follow at residues 198 to 307 (EDDN…PHNK), 319 to 342 (SPDGALKSSPPPSQANHTSPPIQH), and 410 to 467 (SLSS…LPSA). Composition is skewed to acidic residues over residues 215–225 (EDDEEIDLESI) and 233–244 (NDGEQSNEEEDE). Over residues 245–262 (KLEHLRQGEKESFKKESE) the composition is skewed to basic and acidic residues. Over residues 415–431 (KTPERTSPKHSDRENLP) the composition is skewed to basic and acidic residues. Over residues 447 to 460 (RENTLSQQEGTSRI) the composition is skewed to polar residues.

The protein belongs to the TALE/IRO homeobox family. In terms of tissue distribution, expressed in the neural plate in overlapping patterns with other irx members, which all share an anterior border of expression. Also expressed in the mesoderm, placodes and notochord. Broadly expressed in the tailbud rhombencephalon (hindbrain). Outside the nervous system and at tailbud stages, expressed in the developing otic vesicle, branchial arches, prospective heart region and pronephros.

The protein resides in the nucleus. Functionally, acts partially redundantly with other irx members in neural patterning. Required for formation of the posterior forebrain, midbrain, hindbrain, and to a lesser extent, spinal cord. Acts early in neural plate development to induce expression of some but not all proneural genes, and specify a neural precursor state. Also up-regulates repressors that prevent neuronal differentiation. Patterns the neuroectoderm in both the anterior/posterior and dorsal/ventral axes. Acts primarily as a transcriptional repressor during neural development, and binds to the bmp4 promoter to repress gene expression and thus mediate down-regulation of bmp4 by wnt signaling. Controls multiple processes through bmp4-repression including neural plate development, neural crest specification and Spemann organizer development. Involved in the specification of the preplacodal field at the anterior border of the neural plate. Regulates the genetic cascade of interactions that are necessary for positioning the isthmus organizer and the formation of the midbrain-hindbrain boundary. Required during at least two stages of pronephros kidney development; during neurula stages, maintains transcription of key renal genes to define the size and identity of the pronephric anlage, probably in part through regulation of bmp-signaling. Subsequently required for proper formation of the intermediate tubule segment of the pronephros. Acts principally as a transcriptional activator during pronephros development. This Xenopus tropicalis (Western clawed frog) protein is Iroquois-class homeodomain protein irx-1.